A 525-amino-acid chain; its full sequence is MREIMKILIITGKLAERKVKDAVKKYDFIDVHVANISVAAFLTPNLIIKEIKKLENKLGKKLKDIYDFVLVTGLIRHDLKNVEEETGIKCFKSTREASDIPILIENLDKIKLSTKEYADLQLLEIIRKKCEEEIKKAEEQELGEGDIKIGKLKVGDKFPMRVLGEIVHAPWLKEKELEEKIIYYLESGADMIDLGMVSNENNADKIKDMLKIARDLTDNPISVDTLNTKELIEAINLGADMILSVDAGNLDELIPYLKDSETAVVVLPTNYKTNYVPETIEGKIKSLEENIKKLIDAGIEKIVADPILEPINNAGCSFIESVIACREFKKRNKLPLFFGVGNVTELFDADSNGVNALLAAIGAEIGANILFTPEASAKCKFSIKELKIASKMMFLAKKRNSLPKDIGYNLINYKDKRFEEEITFNSYNIPIIKAEEDERQILDEGSFKIEIDRKNKEIVAIYFNKRREPVLIIRGKKPKEIYETAIRLNLIKKLDHASYFGRELAKAEIALRIGKKYNQDFDLFL.

2 consecutive transmembrane segments (helical) span residues 28-48 and 353-373; these read FIDV…NLII and GVNA…LFTP. The Pterin-binding domain occupies 146 to 394; the sequence is DIKIGKLKVG…ELKIASKMMF (249 aa).

The protein resides in the cell membrane. Unknown. Does not possess dihydropteroate synthase (DHPS) activity since it does not catalyze the condensation of 6-hydroxymethyl-7,8-dihydropterin pyrophosphate (DHPP) and 4-aminobenzoate to form 7,8-dihydropteroate. This is an uncharacterized protein from Methanocaldococcus jannaschii (strain ATCC 43067 / DSM 2661 / JAL-1 / JCM 10045 / NBRC 100440) (Methanococcus jannaschii).